Reading from the N-terminus, the 1290-residue chain is Alpha-amylase (1290 aa).

The N-terminal stretch at 1–31 (MTRKTRYLHQITTLILGGLLIVPAAAPPVSA) is a signal peptide. The Nucleophile role is filled by Glu-231. Asp-373 functions as the Proton donor in the catalytic mechanism. Residues 817 to 902 (VPANLQATVM…AAATATTPAG (86 aa)) enclose the Fibronectin type-III domain. A CBM25 region spans residues 902 to 978 (GNHVTVYYKQ…SNGGSNYLFG (77 aa)). 2 stretches are compositionally biased toward low complexity: residues 994-1008 (APVA…APTA) and 1016-1031 (VTPT…VAPT). The tract at residues 994–1037 (APVAPSATPTVAPTATPTPKPSVTPTVTPITTPTVAPTLSPTPT) is disordered. Positions 1092 to 1171 (GNSATIYYKN…NGGSNYHFGT (80 aa)) are CBM25. Residues 1183–1289 (TGEPQADSVT…VTLTVQRWKD (107 aa)) form the CBM20 domain.

It belongs to the glycosyl hydrolase 119 (GH119) family.

It localises to the secreted. The enzyme catalyses Endohydrolysis of (1-&gt;4)-alpha-D-glucosidic linkages in polysaccharides containing three or more (1-&gt;4)-alpha-linked D-glucose units.. Its function is as follows. Acts on maltooligosaccharides that have a degree of polymerization (DP) of 4 or more, amylose, and soluble or raw starch to produce glucose and maltooligosaccharides up to DP5 by a hydrolysis reaction. Also acts on maltooligosyl trehaloses that have DP5 or more to produce trehalose as the major hydrolysis product. This is Alpha-amylase from Niallia circulans (Bacillus circulans).